The primary structure comprises 172 residues: Immune protein Tsi1 (172 aa).

An N-terminal signal peptide occupies residues M1–A19. Intrachain disulfides connect C22–C167, C79–C121, and C147–C155.

Forms a heterotetramer with Tse1 consisting of two Tse1 dimers and two Tsi1 dimers. Formation of the complex inactivates Tse1 enzymatic activity.

In terms of biological role, immunity protein that plays a role in preventing early activation of toxin Tse1. Binds to a large surface of Tse1 and thereby occludes the active site to specifically inhibits enzyme activity by forming a hydrogen bond with the catalytic diad. The protein is Immune protein Tsi1 of Pseudomonas aeruginosa (strain ATCC 15692 / DSM 22644 / CIP 104116 / JCM 14847 / LMG 12228 / 1C / PRS 101 / PAO1).